The sequence spans 460 residues: MGETKKMICLVDGEHYFPVVKDSIEILDDLEHIDVVAVVFIGGTEKLQIEDPKEYSEKLGKPVFFGPDPKKIPYDVIKKCVKKYNADIVMDLSDEPVVDYTKRFRIASIVLKEGAVYQGADFKFEPLTEYDVLEKPSIKIIGTGKRIGKTAVSAYAARVIHKHKYNPCVVAMGRGGPREPEIVEGNKIEITAEYLLEQADKGVHAASDHWEDALMSRILTVGCRRCGGGMLGDTFITNVKRGAEIANKLDSDFVIMEGSGAAIPPVKTNRQIVTVGANQPMININNFFGPFRIGLADLVIITMCEEPMATTEKIKKVEKFIKEINPSANVIPTVFRPKPVGNVEGKKVLFATTAPKVVVGKLVNYLESKYGCDVVGVTPHLSNRPLLRRDLKKYINKADLMLTELKAAAVDVATRVAIEAGLDVVYCDNIPVVIDESYGNIDDAIIEVVEMAIDDFKNNR.

Homodimer.

It localises to the cytoplasm. The enzyme catalyses (2R)-2,3-bisphosphoglycerate + ATP + H(+) = cyclic (2R)-2,3-bisphosphoglycerate + ADP + phosphate. Its function is as follows. Catalyzes the formation of cyclic 2,3-diphosphoglycerate (cDPG) by formation of an intramolecular phosphoanhydride bond at the expense of ATP. It is also able to catalyze the hydrolysis of cDPG but with significant slower rates (8-10 times). May be involved in thermoadaptation. The protein is Cyclic 2,3-diphosphoglycerate synthetase (cpgS) of Methanothermus fervidus (strain ATCC 43054 / DSM 2088 / JCM 10308 / V24 S).